The sequence spans 1708 residues: Rapamycin-insensitive companion of mTOR (1708 aa).

Residues 1-789 (MAAIGRGRSL…DKANLHALIQ (789 aa)) are interaction with NBN. Residues Ser21, Ser35, and Ser265 each carry the phosphoserine modification. Lys274 is covalently cross-linked (Glycyl lysine isopeptide (Lys-Gly) (interchain with G-Cter in ubiquitin)). The interval 521-570 (LKDTEEALLINLRDSQVLQHKENLEWNWNLIGTILKWPNVNLRNYKDEQL) is ribosome-binding domain. Residues Asn543, Arg572, and Arg576 each coordinate ATP. Residues 1022–1041 (LSLNSESTSSRHNSESESVP) form a disordered region. 2 positions are modified to N6-acetyllysine: Lys1092 and Lys1095. The residue at position 1103 (Thr1103) is a Phosphothreonine. Positions 1103–1134 (TLPNKKHRSSSDPKGGKLSSESKTSNRRIRTL) are disordered. N6-acetyllysine occurs at positions 1116, 1119, and 1125. Phosphothreonine; by RPS6KB1 is present on Thr1135. Residues Ser1138, Ser1162, and Ser1219 each carry the phosphoserine modification. The tract at residues 1204-1252 (VVESSTSSHMKIRSQSFNTDTTTSGISSMSSSPSRETVGVDATTMDTDC) is disordered. The span at 1206–1221 (ESSTSSHMKIRSQSFN) shows a compositional bias: polar residues. The segment covering 1222–1240 (TDTTTSGISSMSSSPSRET) has biased composition (low complexity). At Ser1235 the chain carries Phosphoserine; by GSK3-beta. At Thr1271 the chain carries Phosphothreonine. Phosphoserine is present on residues Ser1274, Ser1278, Ser1282, and Ser1284. The segment covering 1275 to 1288 (NHLSLSKSNSVSLV) has biased composition (low complexity). The interval 1275-1298 (NHLSLSKSNSVSLVPPGSSHTLPR) is disordered. Thr1295 is subject to Phosphothreonine. Residues Ser1302 and Ser1313 each carry the phosphoserine modification. Position 1332 is a phosphothreonine (Thr1332). Residues Ser1346 and Ser1353 each carry the phosphoserine modification. At Thr1376 the chain carries Phosphothreonine. Phosphoserine is present on Ser1385. Tyr1386 carries the post-translational modification Phosphotyrosine. Ser1388, Ser1396, and Ser1411 each carry phosphoserine. The Zn(2+) site is built by His1515, Cys1520, and Cys1523. A phosphoserine mark is found at Ser1571, Ser1574, Ser1577, and Ser1591. A Zn(2+)-binding site is contributed by Cys1651. Thr1695 carries the phosphothreonine; by GSK3-alpha and GSK3-beta modification.

The protein belongs to the RICTOR family. As to quaternary structure, component of the mechanistic target of rapamycin complex 2 (mTORC2), consisting in two heterotretramers composed of MTOR, MLST8, RICTOR and MAPKAP1/SIN1. The mTORC2 core complex associates with PRR5/PROTOR1 and/or PRR5L/PROTOR2. Contrary to mTORC1, mTORC2 does not bind to and is not sensitive to FKBP12-rapamycin. Binds directly to MTOR and PRR5 within the TORC2 complex; interaction with MTOR is enhanced by deubiquitination of RICTOR by USP9X. Interaction with MAPKAP1 is not enhanced by RICTOR deubiquitination by USP9X. Interacts with CCDC28B. Interacts with NBN. Interacts with SIK3. Interacts with NCKAP1L. Interacts with kinases GSK3A and GSK3B; the interactions lead to phosphorylation of RICTOR at Thr-1695 which facilitates its FBXW7-mediated ubiquitination and subsequent degradation. Interacts with FBXW7; the interaction is enhanced by GSK3-mediated phosphorylation of Thr-1695 and results in RICTOR ubiquitination and degradation. Interacts with ARMH4 (via cytoplasmic tail); this interaction bridges ARMH4 to the mTORC2 complex and inhibits the mTORC2 kinase activity. Interacts with UBXN2A. Interacts with TSPAN8. In terms of assembly, (Microbial infection) Interacts with vaccinia virus protein F17; this interaction dysregulates MTOR. Post-translationally, phosphorylated by MTOR; when part of mTORC2. Phosphorylated at Thr-1135 by RPS6KB1 downstream of the mTORC1 complex: phosphorylation of RICTOR inhibits mTORC2 signaling by creating a binding site for 14-3-3 proteins. Phosphorylated at Thr-1695 by GSK3A and GSK3B which facilitates RICTOR ubiquitination and subsequent degradation. Phosphorylated at Ser-1235 by GSK3B in response to endoplasmic stress, inhibiting mTORC2 signaling. Ubiquitinated by the SCF(FBXW7) complex, leading to its degradation by the proteasome. Deubiquitinated by USP9X; deubiquitination stabilizes RICTOR and enhances its binding to MTOR, thus promoting mTORC2 complex assembly. In terms of processing, acetylated by EP300/p300 in response to glucose, leading to activate the mTORC2 complex. Acetylation by BLOC1S1/GCN5L1 in response to hypotoxic stress protects RICTOR against ubiquitination and subsequent degradation by the proteasome.

Its subcellular location is the cell membrane. The protein resides in the endoplasmic reticulum membrane. The protein localises to the lysosome membrane. Functionally, component of the mechanistic target of rapamycin complex 2 (mTORC2), which transduces signals from growth factors to pathways involved in proliferation, cytoskeletal organization, lipogenesis and anabolic output. In response to growth factors, mTORC2 phosphorylates and activates AGC protein kinase family members, including AKT (AKT1, AKT2 and AKT3), PKC (PRKCA, PRKCB and PRKCE) and SGK1. In contrast to mTORC1, mTORC2 is nutrient-insensitive. Within the mTORC2 complex, RICTOR probably acts as a molecular adapter. RICTOR is responsible for the FKBP12-rapamycin-insensitivity of mTORC2. mTORC2 plays a critical role in AKT1 activation by mediating phosphorylation of different sites depending on the context, such as 'Thr-450', 'Ser-473', 'Ser-477' or 'Thr-479', facilitating the phosphorylation of the activation loop of AKT1 on 'Thr-308' by PDPK1/PDK1 which is a prerequisite for full activation. mTORC2 catalyzes the phosphorylation of SGK1 at 'Ser-422' and of PRKCA on 'Ser-657'. The mTORC2 complex also phosphorylates various proteins involved in insulin signaling, such as FBXW8 and IGF2BP1. mTORC2 acts upstream of Rho GTPases to regulate the actin cytoskeleton, probably by activating one or more Rho-type guanine nucleotide exchange factors. mTORC2 promotes the serum-induced formation of stress-fibers or F-actin. The sequence is that of Rapamycin-insensitive companion of mTOR from Homo sapiens (Human).